The chain runs to 134 residues: (R)-specific enoyl-CoA hydratase (134 aa).

The MaoC-like domain maps to 5–119 (SLEVGQKARL…ATLTTRIFTQ (115 aa)). A (3R)-3-hydroxyacyl-CoA is bound by residues 32 to 37 (DFNPLH), glycine 55, and phenylalanine 84.

In terms of assembly, homodimer.

The enzyme catalyses a (3R)-3-hydroxyacyl-CoA = a (2E)-enoyl-CoA + H2O. In terms of biological role, catalyzes the hydration of trans-2-enoyl-CoA with a chain-length of 4-6 carbon atoms, forming the corresponding (3R)-3-hydroxyacyl-CoA. The chain is (R)-specific enoyl-CoA hydratase (phaJ) from Aeromonas caviae (Aeromonas punctata).